The sequence spans 149 residues: Protein FAM72A (149 aa).

It belongs to the FAM72 family. Interacts with UNG. In terms of tissue distribution, expressed at high levels in stomach and also in kidney and, at low levels, in heart (at protein level). In the stomach, highly expressed in foveolar cells, parietal cells and chief cells (at protein level). In kidney, expressed in endothelial cells, mesangial and epithelial cells (parietal and visceral epithelium) around glomerulus (at protein level).

It localises to the cytoplasm. The protein localises to the mitochondrion. Functionally, may play a role in the regulation of cellular reactive oxygen species metabolism. May participate in cell growth regulation. The polypeptide is Protein FAM72A (Fam72a) (Rattus norvegicus (Rat)).